A 549-amino-acid chain; its full sequence is Longitudinals lacking protein, isoforms H/M/V (549 aa).

In terms of domain architecture, BTB spans 32-97; sequence VDCTLAAEGK…MYRGEVNISQ (66 aa). Disordered regions lie at residues 115-200 and 228-340; these read LSDN…SSVL and SSGP…ASAS. Low complexity-rich tracts occupy residues 162-175, 228-251, 263-293, and 329-340; these read SGDV…SSSP, SSGP…LTST, TSST…QTTS, and NSATGPNPASAS.

Mostly neuronal.

It is found in the nucleus. Functionally, putative transcription factor required for axon growth and guidance in the central and peripheral nervous systems. Repels CNS axons away from the midline by promoting the expression of the midline repellent sli and its receptor robo. This is Longitudinals lacking protein, isoforms H/M/V from Drosophila melanogaster (Fruit fly).